Reading from the N-terminus, the 149-residue chain is Calmodulin-like protein (149 aa).

EF-hand domains lie at 6–41 (TTQA…VGSN), 42–76 (PTQQ…KMKY), 78–113 (DSEA…IGEK), and 113–148 (KLTK…SKSF). Ca(2+)-binding residues include aspartate 19, aspartate 21, aspartate 23, lysine 25, and glutamate 30.

Belongs to the calmodulin family.

It localises to the contractile vacuole. Mediates the control of a large number of enzymes, ion channels and other proteins by Ca(2+) ions. Among the enzymes to be stimulated by the calmodulin-Ca(2+) complex are a number of protein kinases and phosphatases. This Dictyostelium discoideum (Social amoeba) protein is Calmodulin-like protein (calB).